The primary structure comprises 472 residues: 3-isopropylmalate dehydratase large subunit (472 aa).

The [4Fe-4S] cluster site is built by Cys353, Cys414, and Cys417.

It belongs to the aconitase/IPM isomerase family. LeuC type 1 subfamily. Heterodimer of LeuC and LeuD. The cofactor is [4Fe-4S] cluster.

The enzyme catalyses (2R,3S)-3-isopropylmalate = (2S)-2-isopropylmalate. It functions in the pathway amino-acid biosynthesis; L-leucine biosynthesis; L-leucine from 3-methyl-2-oxobutanoate: step 2/4. Its function is as follows. Catalyzes the isomerization between 2-isopropylmalate and 3-isopropylmalate, via the formation of 2-isopropylmaleate. This is 3-isopropylmalate dehydratase large subunit from Acinetobacter baumannii (strain AB307-0294).